Reading from the N-terminus, the 454-residue chain is Probable succinate-semialdehyde dehydrogenase [NADP(+)] (454 aa).

Residues Trp130–Asn131, Lys154–Ser157, and Gly206–Ser207 contribute to the NADP(+) site. Residue Glu228 is the Proton acceptor of the active site. Leu229 provides a ligand contact to NADP(+). Catalysis depends on Cys262, which acts as the Nucleophile. Glu359 contributes to the NADP(+) binding site.

The protein belongs to the aldehyde dehydrogenase family.

It catalyses the reaction succinate semialdehyde + NADP(+) + H2O = succinate + NADPH + 2 H(+). It functions in the pathway amino-acid degradation; 4-aminobutanoate degradation. Functionally, catalyzes the NADP(+) dependent oxidation of succinate semialdehyde to succinate. This Synechocystis sp. (strain ATCC 27184 / PCC 6803 / Kazusa) protein is Probable succinate-semialdehyde dehydrogenase [NADP(+)] (gabD).